Consider the following 913-residue polypeptide: E3 ubiquitin-protein ligase ZNRF3 (913 aa).

The segment at 1–32 (MRPRSGGRPGAPGRRRRRLRRGPRGRRLPPPP) is disordered. Residues 1-52 (MRPRSGGRPGAPGRRRRRLRRGPRGRRLPPPPPLPLLLGLLLAAAGPGAARA) form the signal peptide. Residues 13–27 (GRRRRRLRRGPRGRR) show a composition bias toward basic residues. Residues 53–216 (KETAFVEVVL…PRQPTEYFDM (164 aa)) are Extracellular-facing. A helical transmembrane segment spans residues 217-237 (GIFLAFFVVVSLVCLILLVKI). Residues 238-913 (KLKQRRSQNS…GSGPGIGTGA (676 aa)) are Cytoplasmic-facing. Residues 290–331 (CAICLEKYIDGEELRVIPCTHRFHRKCVDPWLLQHHTCPHCR) form an RING-type; atypical zinc finger. Disordered regions lie at residues 601–669 (AVHL…GLEV) and 855–913 (REEE…GTGA). Composition is skewed to polar residues over residues 634 to 664 (SGDQ…STSE) and 881 to 890 (ASLSSAPQDT). Over residues 903–913 (PGSGPGIGTGA) the composition is skewed to gly residues.

Belongs to the ZNRF3 family. As to quaternary structure, interacts with LRP6, FZD4, FZD5, FZD6 and FZD8. Interacts with RSPO1; interaction promotes indirect interaction with LGR4 and membrane clearance of ZNRF3. Interacts with LMBR1L.

Its subcellular location is the cell membrane. It catalyses the reaction S-ubiquitinyl-[E2 ubiquitin-conjugating enzyme]-L-cysteine + [acceptor protein]-L-lysine = [E2 ubiquitin-conjugating enzyme]-L-cysteine + N(6)-ubiquitinyl-[acceptor protein]-L-lysine.. It functions in the pathway protein modification; protein ubiquitination. With respect to regulation, negatively regulated by R-spondin proteins such as RSPO1: interaction with RSPO1 induces the indirect association between ZNRF3 and LGR4, promoting membrane clearance of ZNRF3. Its function is as follows. E3 ubiquitin-protein ligase that acts as a negative regulator of the Wnt signaling pathway by mediating the ubiquitination and subsequent degradation of Wnt receptor complex components Frizzled and LRP6. Acts on both canonical and non-canonical Wnt signaling pathway. Acts as a tumor suppressor in the intestinal stem cell zone by inhibiting the Wnt signaling pathway, thereby restricting the size of the intestinal stem cell zone. Along with RSPO2 and RNF43, constitutes a master switch that governs limb specification. The chain is E3 ubiquitin-protein ligase ZNRF3 (Znrf3) from Mus musculus (Mouse).